We begin with the raw amino-acid sequence, 185 residues long: Adenylyl-sulfate kinase (185 aa).

13 to 20 (GLSGAGKS) provides a ligand contact to ATP. Ser-86 serves as the catalytic Phosphoserine intermediate.

The protein belongs to the APS kinase family.

It catalyses the reaction adenosine 5'-phosphosulfate + ATP = 3'-phosphoadenylyl sulfate + ADP + H(+). It participates in sulfur metabolism; hydrogen sulfide biosynthesis; sulfite from sulfate: step 2/3. Catalyzes the synthesis of activated sulfate. This chain is Adenylyl-sulfate kinase, found in Myxococcus xanthus (strain DK1622).